Here is a 1488-residue protein sequence, read N- to C-terminus: Chromosome partition protein MukB (1488 aa).

34-41 (GGNGAGKS) provides a ligand contact to ATP. Coiled coils occupy residues 326 to 418 (LEAD…QYNQ), 444 to 472 (LDTF…QTAH), and 509 to 602 (RHLA…QRAP). Residues 666–783 (PGGAEDQRLN…SLPIFGRAAR (118 aa)) are flexible hinge. 3 coiled-coil regions span residues 835–923 (EAEI…AKLE), 977–1116 (EMLS…AKAG), and 1209–1265 (VEAI…LQSV). The segment at 1049–1074 (ADSGAEERARQRRDELHAQLSNNRSR) is disordered. The segment covering 1051–1065 (SGAEERARQRRDELH) has biased composition (basic and acidic residues).

It belongs to the SMC family. MukB subfamily. In terms of assembly, homodimerization via its hinge domain. Binds to DNA via its C-terminal region. Interacts, and probably forms a ternary complex, with MukE and MukF via its C-terminal region. The complex formation is stimulated by calcium or magnesium. Interacts with tubulin-related protein FtsZ.

The protein resides in the cytoplasm. It is found in the nucleoid. Plays a central role in chromosome condensation, segregation and cell cycle progression. Functions as a homodimer, which is essential for chromosome partition. Involved in negative DNA supercoiling in vivo, and by this means organize and compact chromosomes. May achieve or facilitate chromosome segregation by condensation DNA from both sides of a centrally located replisome during cell division. This is Chromosome partition protein MukB from Salmonella enteritidis PT4 (strain P125109).